The primary structure comprises 390 residues: MAFDLAARLAERRAADLYRQRPLLQSPQGPNVVVDGQPLLAFCSNDYLGLANHPEVIAAWQAGAERWGVGGGASHLVVGHSTPHHQVEEALAELTGRPRALLFSTGYMANLGAITALVGQGDTVLQDRLNHASLLDGGLLSGARFNRYLHNDAVSLANRLGKACGNTLVVTDGVFSMDGDLADLPALAEVARARGAWLMVDDAHGLGTLGAHGGGIVEHFGLGIDDVPVLIGTLGKACGTAGAFVAGSDDLIEALVQFARPYIYTTSQPPALACATLKSLELLRRETWRREHLAGLIRQFREGAVQIGLQLMDSPTPIQPILIGDSAQALRLSQMLRERGLLVTAIRPPTVPAGSARLRVTLSAAHSEAQVQLLLNALADCYPQLEAADA.

Position 19 (Arg19) interacts with substrate. Residue 106–107 (GY) coordinates pyridoxal 5'-phosphate. Residue His131 coordinates substrate. Residues Ser176, His204, and Thr233 each coordinate pyridoxal 5'-phosphate. At Lys236 the chain carries N6-(pyridoxal phosphate)lysine. Thr350 provides a ligand contact to substrate.

The protein belongs to the class-II pyridoxal-phosphate-dependent aminotransferase family. BioF subfamily. As to quaternary structure, homodimer. Requires pyridoxal 5'-phosphate as cofactor.

The enzyme catalyses 6-carboxyhexanoyl-[ACP] + L-alanine + H(+) = (8S)-8-amino-7-oxononanoate + holo-[ACP] + CO2. It functions in the pathway cofactor biosynthesis; biotin biosynthesis. Its function is as follows. Catalyzes the decarboxylative condensation of pimeloyl-[acyl-carrier protein] and L-alanine to produce 8-amino-7-oxononanoate (AON), [acyl-carrier protein], and carbon dioxide. In Pseudomonas putida (strain W619), this protein is 8-amino-7-oxononanoate synthase.